Reading from the N-terminus, the 151-residue chain is 3-hydroxyacyl-[acyl-carrier-protein] dehydratase FabZ (151 aa).

His54 is an active-site residue.

The protein belongs to the thioester dehydratase family. FabZ subfamily.

It localises to the cytoplasm. The catalysed reaction is a (3R)-hydroxyacyl-[ACP] = a (2E)-enoyl-[ACP] + H2O. In terms of biological role, involved in unsaturated fatty acids biosynthesis. Catalyzes the dehydration of short chain beta-hydroxyacyl-ACPs and long chain saturated and unsaturated beta-hydroxyacyl-ACPs. The sequence is that of 3-hydroxyacyl-[acyl-carrier-protein] dehydratase FabZ from Pectobacterium atrosepticum (strain SCRI 1043 / ATCC BAA-672) (Erwinia carotovora subsp. atroseptica).